A 786-amino-acid chain; its full sequence is Myosin light chain kinase 3 (786 aa).

Ser155 carries the phosphoserine modification. Disordered regions lie at residues 233–258, 279–315, and 333–443; these read EALD…SEDT, RMSQ…IHSD, and ELFE…GRRV. Over residues 279–293 the composition is skewed to polar residues; sequence RMSQSAGEGTSSSKP. Ser341 and Ser422 each carry phosphoserine. The Protein kinase domain maps to 482–737; sequence VSQHEVLGGG…ATQCLKHEWL (256 aa). ATP-binding positions include 488–496 and Lys511; that span reads LGGGRFGQV. Residue Asp603 is the Proton acceptor of the active site.

This sequence belongs to the protein kinase superfamily. CAMK Ser/Thr protein kinase family. It depends on Mg(2+) as a cofactor. Phosphorylated on serine residues. As to expression, expressed in cardiomyocytes (at protein level). Up-regulated in heart after experimental myocardial infarction at the mRNA level.

Its subcellular location is the cytoplasm. It carries out the reaction L-seryl-[myosin light chain] + ATP = O-phospho-L-seryl-[myosin light chain] + ADP + H(+). The enzyme catalyses L-threonyl-[myosin light chain] + ATP = O-phospho-L-threonyl-[myosin light chain] + ADP + H(+). Its function is as follows. Calmodulin-dependent kinase that phosphorylates MYL2 in vitro. Promotes sarcomere formation in cardiomyocytes. Increases cardiomyocyte contractility. This chain is Myosin light chain kinase 3 (Mylk3), found in Rattus norvegicus (Rat).